Here is a 180-residue protein sequence, read N- to C-terminus: NADH-quinone oxidoreductase subunit I (180 aa).

2 consecutive 4Fe-4S ferredoxin-type domains span residues 50-80 (LTRD…LQKA) and 90-119 (EFFR…LTPD). [4Fe-4S] cluster contacts are provided by cysteine 60, cysteine 63, cysteine 66, cysteine 70, cysteine 99, cysteine 102, cysteine 105, and cysteine 109.

The protein belongs to the complex I 23 kDa subunit family. NDH-1 is composed of 13 different subunits. Subunits NuoA, H, J, K, L, M, N constitute the membrane sector of the complex. [4Fe-4S] cluster is required as a cofactor.

It localises to the cell inner membrane. The catalysed reaction is a quinone + NADH + 5 H(+)(in) = a quinol + NAD(+) + 4 H(+)(out). Its function is as follows. NDH-1 shuttles electrons from NADH, via FMN and iron-sulfur (Fe-S) centers, to quinones in the respiratory chain. The immediate electron acceptor for the enzyme in this species is believed to be ubiquinone. Couples the redox reaction to proton translocation (for every two electrons transferred, four hydrogen ions are translocated across the cytoplasmic membrane), and thus conserves the redox energy in a proton gradient. The protein is NADH-quinone oxidoreductase subunit I of Shigella boydii serotype 4 (strain Sb227).